Reading from the N-terminus, the 260-residue chain is 4-hydroxy-tetrahydrodipicolinate reductase (260 aa).

NAD(+) is bound by residues 8–13 (GAAGRM), E35, 91–93 (GTT), and 115–118 (APNM). H148 functions as the Proton donor/acceptor in the catalytic mechanism. H149 contacts (S)-2,3,4,5-tetrahydrodipicolinate. K152 acts as the Proton donor in catalysis. (S)-2,3,4,5-tetrahydrodipicolinate is bound at residue 158–159 (GT).

The protein belongs to the DapB family.

Its subcellular location is the cytoplasm. It catalyses the reaction (S)-2,3,4,5-tetrahydrodipicolinate + NAD(+) + H2O = (2S,4S)-4-hydroxy-2,3,4,5-tetrahydrodipicolinate + NADH + H(+). It carries out the reaction (S)-2,3,4,5-tetrahydrodipicolinate + NADP(+) + H2O = (2S,4S)-4-hydroxy-2,3,4,5-tetrahydrodipicolinate + NADPH + H(+). It functions in the pathway amino-acid biosynthesis; L-lysine biosynthesis via DAP pathway; (S)-tetrahydrodipicolinate from L-aspartate: step 4/4. In terms of biological role, catalyzes the conversion of 4-hydroxy-tetrahydrodipicolinate (HTPA) to tetrahydrodipicolinate. This is 4-hydroxy-tetrahydrodipicolinate reductase from Rubrobacter xylanophilus (strain DSM 9941 / JCM 11954 / NBRC 16129 / PRD-1).